Consider the following 360-residue polypeptide: Aminomethyltransferase (360 aa).

It belongs to the GcvT family. The glycine cleavage system is composed of four proteins: P, T, L and H.

It carries out the reaction N(6)-[(R)-S(8)-aminomethyldihydrolipoyl]-L-lysyl-[protein] + (6S)-5,6,7,8-tetrahydrofolate = N(6)-[(R)-dihydrolipoyl]-L-lysyl-[protein] + (6R)-5,10-methylene-5,6,7,8-tetrahydrofolate + NH4(+). Functionally, the glycine cleavage system catalyzes the degradation of glycine. This Legionella pneumophila (strain Paris) protein is Aminomethyltransferase.